A 238-amino-acid chain; its full sequence is Cysteine-rich venom protein pseudecin (238 aa).

An N-terminal signal peptide occupies residues Met1 to Gly19. The propeptide occupies Thr20–Ser28. The 127-residue stretch at Val38–Tyr164 folds into the SCP domain. Zn(2+) is bound by residues Thr51 and Ser106. Intrachain disulfides connect Cys75–Cys153, Cys92–Cys165, Cys148–Cys162, Cys184–Cys191, Cys187–Cys196, Cys200–Cys233, Cys209–Cys227, and Cys218–Cys231. A ShKT domain is found at Cys200–Cys233.

As to expression, expressed by the venom gland.

Its subcellular location is the secreted. In terms of biological role, blocks olfactory (CNGA2) and retinal (CNGA1) CNG channel currents. Is really less potent that Pseudechetoxin. Does not affect neither depolarization- nor caffeine-induced contraction of smooth muscle. This Pseudechis porphyriacus (Red-bellied black snake) protein is Cysteine-rich venom protein pseudecin.